A 540-amino-acid chain; its full sequence is Chaperonin GroEL (540 aa).

ATP-binding positions include 29 to 32, 86 to 90, Gly413, 476 to 478, and Asp492; these read TLGP, DGTTT, and NAA.

It belongs to the chaperonin (HSP60) family. In terms of assembly, forms a cylinder of 14 subunits composed of two heptameric rings stacked back-to-back. Interacts with the co-chaperonin GroES.

The protein resides in the cytoplasm. It carries out the reaction ATP + H2O + a folded polypeptide = ADP + phosphate + an unfolded polypeptide.. Its function is as follows. Together with its co-chaperonin GroES, plays an essential role in assisting protein folding. The GroEL-GroES system forms a nano-cage that allows encapsulation of the non-native substrate proteins and provides a physical environment optimized to promote and accelerate protein folding. The chain is Chaperonin GroEL from Streptococcus pneumoniae (strain P1031).